We begin with the raw amino-acid sequence, 816 residues long: Fibroblast growth factor receptor 1 (816 aa).

The signal sequence occupies residues 1-23 (MLSWRHLVFWAMLVMATLSAARP). At 24–374 (APTLPEQVSP…VIMTSPLYLE (351 aa)) the chain is on the extracellular side. One can recognise an Ig-like C2-type 1 domain in the interval 25–118 (PTLPEQVSPK…ETTFFAVNVS (94 aa)). Cysteines 54 and 100 form a disulfide. 2 N-linked (GlcNAc...) asparagine glycosylation sites follow: Asn-76 and Asn-116. Positions 118–152 (SDRIPSVEDDDDDDEKSSSEEKEAENSKPNPVAPF) are disordered. The segment covering 133 to 143 (KSSSEEKEAEN) has biased composition (basic and acidic residues). 2 Ig-like C2-type domains span residues 156–244 (PEKM…YQLD) and 253–355 (PILQ…AWLT). An intrachain disulfide couples Cys-176 to Cys-228. Asn-238, Asn-262, Asn-294, Asn-315, and Asn-328 each carry an N-linked (GlcNAc...) asparagine glycan. Residues Cys-275 and Cys-339 are joined by a disulfide bond. A helical membrane pass occupies residues 375–395 (IIIYCTGAFLISCMLVTVIIY). Residues 396-816 (KMKNTTKKTD…QHANGGLKKR (421 aa)) are Cytoplasmic-facing. Tyr-459 is subject to Phosphotyrosine; by autocatalysis. Residues 474–763 (LILGKPLGEG…VAMTSNQEYL (290 aa)) form the Protein kinase domain. ATP contacts are provided by residues 480-486 (LGEGCFG), Lys-510, 558-560 (EYA), and Asn-564. A phosphotyrosine; by autocatalysis mark is found at Tyr-579 and Tyr-581. The Proton acceptor role is filled by Asp-619. Arg-623 and Asp-637 together coordinate ATP. Phosphotyrosine; by autocatalysis is present on residues Tyr-649, Tyr-650, Tyr-726, and Tyr-762. Positions 776-816 (FPDTRSSTCSSGEDSVFSHDPLPDEPCLPKYQHANGGLKKR) are disordered. Residues 779–788 (TRSSTCSSGE) are compositionally biased toward polar residues.

This sequence belongs to the protein kinase superfamily. Tyr protein kinase family. Fibroblast growth factor receptor subfamily. As to quaternary structure, monomer. Homodimer after ligand binding. In terms of processing, autophosphorylated. Binding of FGF family members together with heparan sulfate proteoglycan or heparin promotes receptor dimerization and autophosphorylation on tyrosine residues. Autophosphorylation occurs in trans between the two FGFR molecules present in the dimer and proceeds in a highly ordered manner. Phosphotyrosine residues provide docking sites for interacting proteins and so are crucial for FGFR1 function and its regulation. Ubiquitinated. FGFR1 is rapidly ubiquitinated after autophosphorylation, leading to internalization and degradation. Post-translationally, N-glycosylated in the endoplasmic reticulum. The N-glycan chains undergo further maturation to an Endo H-resistant form in the Golgi apparatus.

It localises to the cell membrane. The protein resides in the nucleus. It is found in the cytoplasm. Its subcellular location is the cytosol. The protein localises to the cytoplasmic vesicle. The catalysed reaction is L-tyrosyl-[protein] + ATP = O-phospho-L-tyrosyl-[protein] + ADP + H(+). Its activity is regulated as follows. Present in an inactive conformation in the absence of bound ligand. Ligand binding leads to dimerization and activation by sequential autophosphorylation on tyrosine residues. Tyrosine-protein kinase that acts as a cell-surface receptor for fibroblast growth factors and plays an essential role in the regulation of embryonic development, cell proliferation, differentiation and migration. Required for normal mesoderm patterning and normal skeletogenesis. Phosphorylates PLCG1, FRS2, GAB1 and SHB. Ligand binding leads to the activation of several signaling cascades. Activation of PLCG1 leads to the production of the cellular signaling molecules diacylglycerol and inositol-1,4,5-trisphosphate. Phosphorylation of FRS2 triggers recruitment of GRB2, GAB1, PIK3R1 and SOS1, and mediates activation of RAS, MAPK1/ERK2, MAPK3/ERK1 and the MAP kinase signaling pathway, as well as of the AKT1 signaling pathway. Promotes phosphorylation of SHC1, STAT1 and PTPN11/SHP2. In the nucleus, enhances RPS6KA1 and CREB1 activity and contributes to the regulation of transcription. FGFR1 signaling is down-regulated by ubiquitination, internalization and degradation. This is Fibroblast growth factor receptor 1 (FGFR1) from Pleurodeles waltl (Iberian ribbed newt).